A 1306-amino-acid chain; its full sequence is MYFNNELSDLKDHLLRKLQYYTYSDVVRDRINFILWEFKFLDCFLYLKSFPFASECGMLHVSQKMIEIWKSQWNKLIYICMYDEEGSPWDAVVYWKELISQTKQEFRAQYSFPKSPLAANEVIDDDDDDNTHSPEFVMEVIGFFVGNINVLVKINDPCSCFFVPGLKEQIEQILKELKLLRFLVCFVSNKCIVPQYRCTTFYTRALIEASYIAMVAWLYLPIYGNGNQDLAPSEVSRLLSDFMEMKIKSIEPGISRNSIYIDVLQALKSTIPQAQKKHVEIPTHSLTVGLSDQMANLQEMLCLLRDNLIHLPILDLEFHLQDMDSVIVDAGLLIYSLYDIKGQMEDTSLDVINWALGFDLPRNIEPIKVMAYLVMQKAFHCNLPRIHGLGYVDFLLKNLNDFQDCYSDSLAFLKNQLQVIQTEFESLQPFLKVVAEEPHNKLKTLNEDCATQIIRKAYEVEYVVDACINKEALHWCLERWLLDIIEEITCIKAKIQEKNTVEDTMKTVIARTSSKLARTPRMKEEIVGFEDVIENLRKKLLSRTKGQDVISIHGMPGLGKTTLANRLYSDRSVVSQFDFCAQCCVSQVYSCKDLLLSLLRDAIGEESERRELPDNELADMLRKTLLPRRYLILVDDVWDNSAWDDLRGCFPDVNNRSRIILTTRHHEVAKYASVRSDPLHLRMFDEVESWKLLEKKVFGEQSCPPLLKNIGLRIAKMCGQLPLSIVLVAGILSEMEKDVECWEQVANNLGSHIHNDSRAIVDQSYHVLPCHLKSCFLYFGAFLEDRVIDISRLIRLWISEAFIKSSEGRSLEDIAEGYLENLIGRNLVMVTQRAISDGKVKACRLHDVLLDFCKERAAEENFLLWINRDQITKPSSCVYSHKQHAHLAFTEMHNLVEWSASCSFVGSVVLSNKYEPYFHDLSSLHDFSISRILPNFKFLKVLDLEHRVFIDFIPTELPYLRYFSALIDQNSIPSSISNLWNLETLILNRRSADSHNRVLLPSTVWDMVKLRHLHIPNFSPENKKALLKNSPNLDDLETLSYPYFARVKDAELMLRKTPNLRKLTCKVKCLEYLHQYHALNFPIRLEILKLYRSNAFKAIPFCISAPNLKYLKLSGFYLDSQYLSKTADHLKNLEVLKLYYVEFGDHREWKVSNGMFPQLKILKLEDVSLMKWIVADDAFPNLEQLVLRGCQDLMEIPSCFMDILSLQYIEVEDCNESVVKSAMNIQETQVEDYQNTNFKLVLIEKWPKFYKLFSQLSLPRGLVLHLGIESVSSDEKEKKLTVTGDVDADEVQLVVEKLRKCGMPGL.

2 coiled-coil regions span residues 407–428 (SDSL…ESLQ) and 520–542 (PRMK…KLLS). One can recognise an NB-ARC domain in the interval 521–808 (RMKEEIVGFE…SEAFIKSSEG (288 aa)). Residue 554–561 (GMPGLGKT) participates in ATP binding. LRR repeat units follow at residues 858-881 (AEEN…VYSH), 921-935 (LSSL…ILPN), 936-961 (FKFL…PYLR), 979-1007 (LWNL…VWDM), 1010-1035 (LRHL…NLDD), 1057-1081 (TPNL…ALNF), 1082-1106 (PIRL…ISAP), 1110-1129 (YLKL…TADH), 1130-1153 (LKNL…KVSN), 1156-1181 (FPQL…AFPN), and 1216-1240 (ESVV…NFKL). In terms of domain architecture, HMA spans 1240–1306 (LVLIEKWPKF…KLRKCGMPGL (67 aa)).

The protein belongs to the disease resistance NB-LRR family.

The protein resides in the cytoplasm. The protein localises to the membrane. Functionally, confers resistance to late blight (Phytophthora infestans) races carrying the avirulence gene Avr1. Resistance proteins guard the plant against pathogens that contain an appropriate avirulence protein via an indirect interaction with this avirulence protein. That triggers a defense system including the hypersensitive response, which restricts the pathogen growth. The chain is Putative late blight resistance protein homolog R1A-10 (R1A-10) from Solanum demissum (Wild potato).